Here is a 499-residue protein sequence, read N- to C-terminus: Putative antiporter subunit mnhD2 (499 aa).

14 helical membrane passes run 3 to 23 (SNLL…LVFT), 32 to 52 (ILYI…LIYV), 78 to 98 (LSLV…SYGF), 108 to 128 (YYLP…FLTS), 130 to 150 (LFNL…LVTL), 161 to 181 (IIYV…IGLL), 206 to 226 (IIII…LVLF), 240 to 260 (LAAL…IRFF), 273 to 293 (PLLV…VIAY), 308 to 328 (IGFV…GAIF), 330 to 350 (LAND…LVYM), 368 to 388 (FFGV…PFSG), 403 to 423 (GNFI…YSLF), and 450 to 470 (TILG…PVVM).

The protein belongs to the CPA3 antiporters (TC 2.A.63) subunit D family. As to quaternary structure, may form a heterooligomeric complex that consists of seven subunits: mnhA2, mnhB2, mnhC2, mnhD2, mnhE2, mnhF2 and mnhG2.

Its subcellular location is the cell membrane. The polypeptide is Putative antiporter subunit mnhD2 (mnhD2) (Staphylococcus haemolyticus (strain JCSC1435)).